The sequence spans 502 residues: Alpha-ketoglutarate-dependent dioxygenase FTO (502 aa).

The interval 32–324 (TPKDDEFYQQ…SSTHRVAECS (293 aa)) is fe2OG dioxygenase domain. 2 residues coordinate substrate: arginine 96 and tyrosine 108. Asparagine 202 lines the 2-oxoglutarate pocket. Positions 210–221 (PYLKEEPYFGMG) are loop L1; predicted to block binding of double-stranded DNA or RNA. At lysine 213 the chain carries N6-acetyllysine. Residues histidine 228 and aspartate 230 each contribute to the Fe cation site. 228-231 (HHDE) serves as a coordination point for substrate. Tyrosine 292 is a binding site for 2-oxoglutarate. Histidine 304 provides a ligand contact to Fe cation. Residues 313 to 315 (RFS), threonine 317, and arginine 319 each bind 2-oxoglutarate.

It belongs to the fto family. Monomer. May also exist as homodimer. Fe(2+) serves as cofactor. Ubiquitous. Detected in brain, brain cortex, hypothalamus, cerebellum, liver, pancreas, heart, kidney, white adipose tissue and skeletal muscle. Most abundant in the brain, particularly in hypothalamic nuclei governing energy balance.

It localises to the nucleus. It is found in the nucleus speckle. Its subcellular location is the cytoplasm. The enzyme catalyses a 5'-end (N(7)-methyl 5'-triphosphoguanosine)-(N(6),2'-O-dimethyladenosine) in mRNA + 2-oxoglutarate + O2 = a 5'-end (N(7)-methyl 5'-triphosphoguanosine)-(2'-O-methyladenosine) in mRNA + formaldehyde + succinate + CO2. It carries out the reaction an N(6)-methyladenosine in mRNA + 2-oxoglutarate + O2 = an adenosine in mRNA + formaldehyde + succinate + CO2. The catalysed reaction is N(6)-methyladenosine in U6 snRNA + 2-oxoglutarate + O2 = adenosine in U6 snRNA + formaldehyde + succinate + CO2. It catalyses the reaction a 5'-end (N(7)-methyl 5'-triphosphoguanosine)-(N(6),2'-O-dimethyladenosine) in U6 snRNA + 2-oxoglutarate + O2 = a 5'-end (N(7)-methyl 5'-triphosphoguanosine)-(2'-O-methyladenosine) in U6 snRNA + formaldehyde + succinate + CO2. The enzyme catalyses an N(1)-methyladenosine in tRNA + 2-oxoglutarate + O2 = an adenosine in tRNA + formaldehyde + succinate + CO2. Its activity is regulated as follows. Activated by ascorbate. Inhibited by N-oxalylglycine, fumarate and succinate. RNA demethylase that mediates oxidative demethylation of different RNA species, such as mRNAs, tRNAs and snRNAs, and acts as a regulator of fat mass, adipogenesis and energy homeostasis. Specifically demethylates N(6)-methyladenosine (m6A) RNA, the most prevalent internal modification of messenger RNA (mRNA) in higher eukaryotes. M6A demethylation by FTO affects mRNA expression and stability. Also able to demethylate m6A in U6 small nuclear RNA (snRNA). Mediates demethylation of N(6),2'-O-dimethyladenosine cap (m6A(m)), by demethylating the N(6)-methyladenosine at the second transcribed position of mRNAs and U6 snRNA. Demethylation of m6A(m) in the 5'-cap by FTO affects mRNA stability by promoting susceptibility to decapping. Also acts as a tRNA demethylase by removing N(1)-methyladenine from various tRNAs. Has no activity towards 1-methylguanine. Has no detectable activity towards double-stranded DNA. Also able to repair alkylated DNA and RNA by oxidative demethylation: demethylates single-stranded RNA containing 3-methyluracil, single-stranded DNA containing 3-methylthymine and has low demethylase activity towards single-stranded DNA containing 1-methyladenine or 3-methylcytosine. Ability to repair alkylated DNA and RNA is however unsure in vivo. Involved in the regulation of fat mass, adipogenesis and body weight, thereby contributing to the regulation of body size and body fat accumulation. Involved in the regulation of thermogenesis and the control of adipocyte differentiation into brown or white fat cells. Regulates activity of the dopaminergic midbrain circuitry via its ability to demethylate m6A in mRNAs. The polypeptide is Alpha-ketoglutarate-dependent dioxygenase FTO (Mus musculus (Mouse)).